Reading from the N-terminus, the 260-residue chain is DNA repair protein RecO (260 aa).

The disordered stretch occupies residues 239-260 (SAGVAAARKAGGDGSDGDEGEQ).

This sequence belongs to the RecO family.

Functionally, involved in DNA repair and RecF pathway recombination. In Sodalis glossinidius (strain morsitans), this protein is DNA repair protein RecO.